Reading from the N-terminus, the 430-residue chain is Meiotically up-regulated gene 132 protein (430 aa).

It belongs to the UPF0300 family.

Its subcellular location is the mitochondrion. Its function is as follows. Has a role in meiosis. The protein is Meiotically up-regulated gene 132 protein (mug132) of Schizosaccharomyces pombe (strain 972 / ATCC 24843) (Fission yeast).